The chain runs to 331 residues: NADH-quinone oxidoreductase subunit H (331 aa).

8 helical membrane passes run 7–27 (ALVT…AVVI), 81–101 (MIFT…FAIV), 114–134 (IGIL…LFAG), 154–174 (ISYE…VGSF), 187–207 (VWFI…GVAV), 238–258 (FFVG…TLFF), 271–291 (WLSF…FILI), and 310–330 (VCLP…LAAA).

Belongs to the complex I subunit 1 family. NDH-1 is composed of 13 different subunits. Subunits NuoA, H, J, K, L, M, N constitute the membrane sector of the complex.

It localises to the cell inner membrane. It carries out the reaction a quinone + NADH + 5 H(+)(in) = a quinol + NAD(+) + 4 H(+)(out). NDH-1 shuttles electrons from NADH, via FMN and iron-sulfur (Fe-S) centers, to quinones in the respiratory chain. The immediate electron acceptor for the enzyme in this species is believed to be ubiquinone. Couples the redox reaction to proton translocation (for every two electrons transferred, four hydrogen ions are translocated across the cytoplasmic membrane), and thus conserves the redox energy in a proton gradient. This subunit may bind ubiquinone. This Pseudomonas paraeruginosa (strain DSM 24068 / PA7) (Pseudomonas aeruginosa (strain PA7)) protein is NADH-quinone oxidoreductase subunit H.